We begin with the raw amino-acid sequence, 190 residues long: NADH-quinone oxidoreductase subunit B (190 aa).

[4Fe-4S] cluster is bound by residues cysteine 39, cysteine 40, cysteine 104, and cysteine 135.

This sequence belongs to the complex I 20 kDa subunit family. As to quaternary structure, NDH-1 is composed of 14 different subunits. Subunits NuoB, C, D, E, F, and G constitute the peripheral sector of the complex. [4Fe-4S] cluster is required as a cofactor.

The protein localises to the cell inner membrane. The enzyme catalyses a quinone + NADH + 5 H(+)(in) = a quinol + NAD(+) + 4 H(+)(out). Its function is as follows. NDH-1 shuttles electrons from NADH, via FMN and iron-sulfur (Fe-S) centers, to quinones in the respiratory chain. The immediate electron acceptor for the enzyme in this species is believed to be a menaquinone. Couples the redox reaction to proton translocation (for every two electrons transferred, four hydrogen ions are translocated across the cytoplasmic membrane), and thus conserves the redox energy in a proton gradient. In Prosthecochloris aestuarii (strain DSM 271 / SK 413), this protein is NADH-quinone oxidoreductase subunit B.